A 423-amino-acid polypeptide reads, in one-letter code: Cytidylate cyclase (423 aa).

Residues 79 to 184 (CSLFVDISGS…LKIRIGIDFG (106 aa)) enclose the Guanylate cyclase domain. Phenylalanine 82 is an a ribonucleoside 5'-triphosphate binding site. 3 residues coordinate Mn(2+): aspartate 84, isoleucine 85, and aspartate 128. The tract at residues 290–409 (ENEQFYSPRD…ICHDSFGLFI (120 aa)) is AGS-C domain.

Belongs to the adenylyl cyclase class-4/guanylyl cyclase family. Pyrimidine cyclase subfamily. As to quaternary structure, homodimer. Mn(2+) is required as a cofactor.

The protein localises to the cytoplasm. The enzyme catalyses CTP = 3',5'-cyclic CMP + diphosphate. Pycsar (pyrimidine cyclase system for antiphage resistance) provides immunity against bacteriophage. The pyrimidine cyclase (PycC) synthesizes cyclic nucleotides in response to infection; these serve as specific second messenger signals. The signal activates the adjacent effector, leading to bacterial cell death and abortive phage infection. A clade E Pycsar system. Its function is as follows. The pyrimidine cyclase gene of a two-gene Pycsar system, weakly generates cyclic CMP (cCMP) from CTP, has little to no activity on ATP, GTP or UTP. Expression of this and adjacent effector SaPycTM (AC P0DV39) probably confers resistance to bacteriophage. The genes are probably only expressed in response to bacteriophage infection. This chain is Cytidylate cyclase, found in Staphylococcus aureus.